Here is a 113-residue protein sequence, read N- to C-terminus: Nucleoid-associated protein Athe_1143 (113 aa).

The protein belongs to the YbaB/EbfC family. Homodimer.

It localises to the cytoplasm. The protein localises to the nucleoid. Binds to DNA and alters its conformation. May be involved in regulation of gene expression, nucleoid organization and DNA protection. The sequence is that of Nucleoid-associated protein Athe_1143 from Caldicellulosiruptor bescii (strain ATCC BAA-1888 / DSM 6725 / KCTC 15123 / Z-1320) (Anaerocellum thermophilum).